We begin with the raw amino-acid sequence, 562 residues long: Cytosolic Fe-S cluster assembly factor nar1 (562 aa).

C20 contributes to the [4Fe-4S] cluster binding site. Positions 28-47 (PKNESSNSQNPYEVTTEDKV) are disordered. A compositionally biased stretch (polar residues) spans 29-40 (KNESSNSQNPYE). Residues C62, C65, C68, C214, and C269 each coordinate [4Fe-4S] cluster. Positions 439-462 (ARVPAASAGGNRRQPISRNSASAG) are disordered. A compositionally biased stretch (polar residues) spans 452-462 (QPISRNSASAG). C475 and C479 together coordinate [4Fe-4S] cluster. 2 disordered regions span residues 492–513 (REAS…PTPH) and 541–562 (HSPS…IGLT). Residues 494 to 505 (ASTSTQSVTAVE) show a composition bias toward polar residues.

Belongs to the NARF family.

Component of the cytosolic Fe/S protein assembly machinery. Required for maturation of extramitochondrial Fe/S proteins. May play a role in the transfer of pre-assembled Fe/S clusters to target apoproteins. In Aspergillus flavus (strain ATCC 200026 / FGSC A1120 / IAM 13836 / NRRL 3357 / JCM 12722 / SRRC 167), this protein is Cytosolic Fe-S cluster assembly factor nar1 (nar1).